The chain runs to 375 residues: MKVWLLLGLLLLHEALGDVAGQHPPKNKRPKEQGENRIKPTNKKAKPKIPKIKDRDTADSAPKSQSIMMQAMDNGRFQKPAATVSLMAGQSVELRCKGSKVEWSYPAYLDTFKDSRLTVKQNERYGQLTLVNSTTADTGEFSCWERLCNGYICRRDEARTGSTYIFFTEKGELFVPSPSYFDVVYLNPDRQAVVPCRVTAPSAKVTLHREFPAKEIPANGTDIVYDMKRGFVYLQPHSDHQGVVYCKAEAGGKSQISVKYQLLYVEVPSGPPSTTILASSNKVRGGDDISVLCTVLGEPDVEVEFRWIFPGQKDERPVTIQDTWRLIHRGLGHTTRISQSVITVEDFETIDAGYYICTAQNLRGQTTVATTVEFS.

A signal peptide spans 1–17 (MKVWLLLGLLLLHEALG). The interval 19–63 (VAGQHPPKNKRPKEQGENRIKPTNKKAKPKIPKIKDRDTADSAPK) is disordered. A compositionally biased stretch (basic residues) spans 40 to 50 (PTNKKAKPKIP). The Ig-like C2-type 1 domain maps to 62-159 (PKSQSIMMQA…GYICRRDEAR (98 aa)). A disulfide bond links Cys96 and Cys143. Asn219 carries N-linked (GlcNAc...) asparagine glycosylation. In terms of domain architecture, Ig-like C2-type 2 spans 272–375 (PSTTILASSN…TTVATTVEFS (104 aa)). Cys293 and Cys357 form a disulfide bridge.

As to quaternary structure, forms a complex composed of PDGFRL, TNK2 and GRB2.

It is found in the secreted. The chain is Platelet-derived growth factor receptor-like protein (Pdgfrl) from Rattus norvegicus (Rat).